Here is a 538-residue protein sequence, read N- to C-terminus: Bifunctional purine biosynthesis protein PurH (538 aa).

In terms of domain architecture, MGS-like spans 8–158 (IPAPDKVEIK…KNHAYVTILT (151 aa)).

The protein belongs to the PurH family.

It carries out the reaction (6R)-10-formyltetrahydrofolate + 5-amino-1-(5-phospho-beta-D-ribosyl)imidazole-4-carboxamide = 5-formamido-1-(5-phospho-D-ribosyl)imidazole-4-carboxamide + (6S)-5,6,7,8-tetrahydrofolate. The enzyme catalyses IMP + H2O = 5-formamido-1-(5-phospho-D-ribosyl)imidazole-4-carboxamide. It participates in purine metabolism; IMP biosynthesis via de novo pathway; 5-formamido-1-(5-phospho-D-ribosyl)imidazole-4-carboxamide from 5-amino-1-(5-phospho-D-ribosyl)imidazole-4-carboxamide (10-formyl THF route): step 1/1. The protein operates within purine metabolism; IMP biosynthesis via de novo pathway; IMP from 5-formamido-1-(5-phospho-D-ribosyl)imidazole-4-carboxamide: step 1/1. The sequence is that of Bifunctional purine biosynthesis protein PurH from Rhizobium etli (strain CIAT 652).